The following is a 181-amino-acid chain: Adenine phosphoribosyltransferase (181 aa).

This sequence belongs to the purine/pyrimidine phosphoribosyltransferase family. As to quaternary structure, homodimer.

Its subcellular location is the cytoplasm. It catalyses the reaction AMP + diphosphate = 5-phospho-alpha-D-ribose 1-diphosphate + adenine. It functions in the pathway purine metabolism; AMP biosynthesis via salvage pathway; AMP from adenine: step 1/1. Functionally, catalyzes a salvage reaction resulting in the formation of AMP, that is energically less costly than de novo synthesis. This Brucella abortus (strain S19) protein is Adenine phosphoribosyltransferase.